Here is a 43-residue protein sequence, read N- to C-terminus: Protein PsbN (43 aa).

Residues 5–27 (TLVAISISGSLVSFTGYALYTAF) form a helical membrane-spanning segment.

Belongs to the PsbN family.

The protein localises to the plastid. It localises to the chloroplast thylakoid membrane. In terms of biological role, may play a role in photosystem I and II biogenesis. The sequence is that of Protein PsbN from Lactoris fernandeziana.